We begin with the raw amino-acid sequence, 282 residues long: Elongation factor Ts (282 aa).

The interval 80–83 (TDFV) is involved in Mg(2+) ion dislocation from EF-Tu.

It belongs to the EF-Ts family.

The protein resides in the cytoplasm. Its function is as follows. Associates with the EF-Tu.GDP complex and induces the exchange of GDP to GTP. It remains bound to the aminoacyl-tRNA.EF-Tu.GTP complex up to the GTP hydrolysis stage on the ribosome. The chain is Elongation factor Ts from Chlamydia trachomatis serovar L2b (strain UCH-1/proctitis).